The chain runs to 457 residues: MQKYISEARLLLALAIPVILAQIAQTAMGFVDTVMAGGYSATDMAAVAIGTSIWLPAILFGHGLLLALTPVIAQLNGSGRRERIAHQVRQGFWLAGFVSVLIMLVLWNAGYIIRSMQNIDPALADKAVGYLRALLWGAPGYLFFQVARNQCEGLAKTKPGMVMGFIGLLVNIPVNYIFIYGHFGMPELGGVGCGVATAAVYWVMFLAMVSYIKRARSMRDIRNEKGTAKPDPAVMKRLIQLGLPIALALFFEVTLFAVVALLVSPLGIVDVAGHQIALNFSSLMFVLPMSLAAAVTIRVGYRLGQGSTLDAQTAARTGLMVGVCMATLTAIFTVSLREQIALLYNDNPEVVTLAAHLMLLAAVYQISDSIQVIGSGILRGYKDTRSIFYITFTAYWVLGLPSGYILALTDLVVEPMGPAGFWIGFIIGLTSAAIMMMLRMRFLQRLPSAIILQRAAR.

12 helical membrane-spanning segments follow: residues 11–31 (LLAL…MGFV), 53–73 (IWLP…PVIA), 93–113 (WLAG…GYII), 127–147 (AVGY…FQVA), 160–180 (GMVM…IFIY), 189–209 (GGVG…LAMV), 243–263 (LPIA…ALLV), 276–296 (IALN…AAVT), 314–334 (AART…IFTV), 350–370 (VVTL…SDSI), 387–407 (IFYI…YILA), and 418–438 (PAGF…MMML).

Belongs to the multi antimicrobial extrusion (MATE) (TC 2.A.66.1) family. MdtK subfamily.

Its subcellular location is the cell inner membrane. Multidrug efflux pump that functions probably as a Na(+)/drug antiporter. The chain is Multidrug resistance protein MdtK from Escherichia coli O45:K1 (strain S88 / ExPEC).